The primary structure comprises 541 residues: 5' exonuclease Apollo (541 aa).

A Glycyl lysine isopeptide (Lys-Gly) (interchain with G-Cter in SUMO2) cross-link involves residue lysine 334. Disordered regions lie at residues 350–375 (TQGV…KKHK) and 450–489 (IGLG…TTHL). The segment covering 358 to 371 (PEEKADQVKVDRDS) has biased composition (basic and acidic residues). Residues 492–507 (ESGGLALKYLLTPVDF) carry the TBM motif.

This sequence belongs to the DNA repair metallo-beta-lactamase (DRMBL) family. Interacts with TERF2; the interaction is direct. Interacts with MUS81, MRE11 and FANCD2. Interacts with HSPA2, HSPA8 and HSPA14. Interacts with SPAG5. Post-translationally, ubiquitinated, leading to its degradation. Interaction with TERF2 protects it from ubiquitination.

The protein localises to the chromosome. Its subcellular location is the telomere. The protein resides in the nucleus. It localises to the cytoplasm. It is found in the cytoskeleton. The protein localises to the microtubule organizing center. Its subcellular location is the centrosome. It carries out the reaction a beta-lactam + H2O = a substituted beta-amino acid. In terms of biological role, 5'-3' exonuclease that plays a central role in telomere maintenance and protection during S-phase. Participates in the protection of telomeres against non-homologous end-joining (NHEJ)-mediated repair, thereby ensuring that telomeres do not fuse. Plays a key role in telomeric loop (T loop) formation by being recruited by TERF2 at the leading end telomeres and by processing leading-end telomeres immediately after their replication via its exonuclease activity: generates 3' single-stranded overhang at the leading end telomeres avoiding blunt leading-end telomeres that are vulnerable to end-joining reactions and expose the telomere end in a manner that activates the DNA repair pathways. Together with TERF2, required to protect telomeres from replicative damage during replication by controlling the amount of DNA topoisomerase (TOP1, TOP2A and TOP2B) needed for telomere replication during fork passage and prevent aberrant telomere topology. Also involved in response to DNA damage: plays a role in response to DNA interstrand cross-links (ICLs) by facilitating double-strand break formation. In case of spindle stress, involved in prophase checkpoint. Possesses beta-lactamase activity, catalyzing the hydrolysis of penicillin G and nitrocefin. Exhibits no activity towards other beta-lactam antibiotic classes including cephalosporins (cefotaxime) and carbapenems (imipenem). This Rattus norvegicus (Rat) protein is 5' exonuclease Apollo (Dclre1b).